The primary structure comprises 115 residues: Tyrosine-protein phosphatase 24 (115 aa).

Residues 1–115 (WMMIVEQKCR…ETGSDAPMVV (115 aa)) form the Tyrosine-protein phosphatase domain. A substrate-binding site is contributed by D83.

Belongs to the protein-tyrosine phosphatase family.

It catalyses the reaction O-phospho-L-tyrosyl-[protein] + H2O = L-tyrosyl-[protein] + phosphate. The sequence is that of Tyrosine-protein phosphatase 24 (STY-24) from Styela plicata (Wrinkled sea squirt).